The primary structure comprises 178 residues: Arginine repressor (178 aa).

Positions 1–20 are disordered; the sequence is MTEAQEPEYGGPSVPQTRTA.

The protein belongs to the ArgR family.

Its subcellular location is the cytoplasm. It functions in the pathway amino-acid biosynthesis; L-arginine biosynthesis [regulation]. In terms of biological role, regulates arginine biosynthesis genes. The sequence is that of Arginine repressor from Streptomyces griseus subsp. griseus (strain JCM 4626 / CBS 651.72 / NBRC 13350 / KCC S-0626 / ISP 5235).